A 435-amino-acid chain; its full sequence is Putative F-box/kelch-repeat protein At1g20790 (435 aa).

The region spanning 1-49 is the F-box domain; it reads MKRLPLHLLDEILFNLDPKSLGKMRCTNKSINTHISDDPNFKFEYFSRI. 2 Kelch repeats span residues 192-238 and 280-335; these read PVYV…CTGD and LYWN…LFKP.

This chain is Putative F-box/kelch-repeat protein At1g20790, found in Arabidopsis thaliana (Mouse-ear cress).